Here is a 335-residue protein sequence, read N- to C-terminus: RNA polymerase sigma factor RpoS (335 aa).

The interval 57–90 (DATQMYLSEIGFSPLLTAEEEVLYARRALRGDEA) is sigma-70 factor domain-1. The sigma-70 factor domain-2 stretch occupies residues 95–165 (MIESNLRLVV…ERALMNQTRT (71 aa)). The short motif at 119-122 (DLIE) is the Interaction with polymerase core subunit RpoC element. Positions 175–250 (ELNIYLRTAR…DSHNADPEFS (76 aa)) are sigma-70 factor domain-3. Residues 263-316 (WLDELNPKQKEVLARRFGLLGYEPSTLEEVGREINLTRERVRQIQVEGLRRLRE) form a sigma-70 factor domain-4 region. Positions 289–308 (LEEVGREINLTRERVRQIQV) form a DNA-binding region, H-T-H motif.

Belongs to the sigma-70 factor family. RpoS subfamily. As to quaternary structure, interacts with the RNA polymerase core enzyme.

The protein localises to the cytoplasm. Its function is as follows. Sigma factors are initiation factors that promote the attachment of RNA polymerase to specific initiation sites and are then released. This sigma factor is the master transcriptional regulator of the stationary phase and the general stress response. May be required for the persistence of V.cholerae in aquatic habitats. The sequence is that of RNA polymerase sigma factor RpoS from Vibrio cholerae serotype O1 (strain ATCC 39315 / El Tor Inaba N16961).